Consider the following 331-residue polypeptide: MVEIYYDDDANLDNLADRKVAVIGFGSQGHAHALNLRDSGVDVRVGLPETSTSRAKAEEQGLRVVTPAEASAEADIIMILTPDTTHRKIYAESIAPHLTPGKALAFGHGFNIRYGLIEPPAGVDVFMVAPKGPGHLVRRVFVEGKGVPVLVAVEADATGKALDIALAYAKGIGGTRAGALRTTFTEETETDLFGEQAVLCGGASALVQAGFETLVEAGYTPEVAYFECLHELKLIVDLMYEGGISQMRYSISDTAEYGDVTRGPRVITPAVKAEMRKILDEIQDGTFAREWVAEDDAGRATFTKLVEEGKQHPIEQVGGKLRPMMSWIAKD.

Residues 2 to 182 (VEIYYDDDAN…GGTRAGALRT (181 aa)) enclose the KARI N-terminal Rossmann domain. NADP(+) contacts are provided by residues 25–28 (FGSQ), Ser-51, and Ser-53. Residue His-108 is part of the active site. An NADP(+)-binding site is contributed by Gly-134. The 146-residue stretch at 183-328 (TFTEETETDL…GKLRPMMSWI (146 aa)) folds into the KARI C-terminal knotted domain. Positions 191, 195, 227, and 231 each coordinate Mg(2+). Ser-252 contributes to the substrate binding site.

Belongs to the ketol-acid reductoisomerase family. Mg(2+) is required as a cofactor.

The enzyme catalyses (2R)-2,3-dihydroxy-3-methylbutanoate + NADP(+) = (2S)-2-acetolactate + NADPH + H(+). The catalysed reaction is (2R,3R)-2,3-dihydroxy-3-methylpentanoate + NADP(+) = (S)-2-ethyl-2-hydroxy-3-oxobutanoate + NADPH + H(+). The protein operates within amino-acid biosynthesis; L-isoleucine biosynthesis; L-isoleucine from 2-oxobutanoate: step 2/4. Its pathway is amino-acid biosynthesis; L-valine biosynthesis; L-valine from pyruvate: step 2/4. Its function is as follows. Involved in the biosynthesis of branched-chain amino acids (BCAA). Catalyzes an alkyl-migration followed by a ketol-acid reduction of (S)-2-acetolactate (S2AL) to yield (R)-2,3-dihydroxy-isovalerate. In the isomerase reaction, S2AL is rearranged via a Mg-dependent methyl migration to produce 3-hydroxy-3-methyl-2-ketobutyrate (HMKB). In the reductase reaction, this 2-ketoacid undergoes a metal-dependent reduction by NADPH to yield (R)-2,3-dihydroxy-isovalerate. The chain is Ketol-acid reductoisomerase (NADP(+)) from Parafrankia sp. (strain EAN1pec).